Reading from the N-terminus, the 82-residue chain is Short neurotoxin OKI-10 (82 aa).

The N-terminal stretch at 1–20 is a signal peptide; it reads KTLLLTLVVVTIVCLDLGYT. Intrachain disulfides connect Cys23/Cys44, Cys37/Cys61, Cys63/Cys74, and Cys75/Cys80.

This sequence belongs to the three-finger toxin family. Short-chain subfamily. Type I alpha-neurotoxin sub-subfamily. As to expression, expressed by the venom gland.

The protein resides in the secreted. Functionally, binds to muscle nicotinic acetylcholine receptor (nAChR) and inhibit acetylcholine from binding to the receptor, thereby impairing neuromuscular transmission. This is Short neurotoxin OKI-10 from Laticauda laticaudata (Blue-ringed sea krait).